Reading from the N-terminus, the 1120-residue chain is Hachiman protein HamB (1120 aa).

The region spanning 278 to 452 (DGELLKNDGF…WIGEDDKAKR (175 aa)) is the Helicase ATP-binding domain. 291–298 (MPTSSGKT) is an ATP binding site. A DEAH box motif is present at residues 395-398 (DEGH). One can recognise a Helicase C-terminal domain in the interval 521–710 (ATATKMLDVG…NIEKATSGLY (190 aa)).

It belongs to the helicase family.

In terms of biological role, component of antiviral defense system Hachiman, composed of HamA and HamB. Expression of Hachiman in B.subtilis (strain BEST7003) confers resistance to phages phi105, phi29, phi3T, rho14, SBSphiJ, SpBeta and SPR. Probably a helicase. This Bacillus cereus protein is Hachiman protein HamB.